Here is a 473-residue protein sequence, read N- to C-terminus: Glutamate--tRNA ligase (473 aa).

Residues 11-21 carry the 'HIGH' region motif; the sequence is PSPTGFLHIGG. Residues 240–244 carry the 'KMSKS' region motif; the sequence is KLSKR. Residue K243 participates in ATP binding.

This sequence belongs to the class-I aminoacyl-tRNA synthetase family. Glutamate--tRNA ligase type 1 subfamily. In terms of assembly, monomer.

It localises to the cytoplasm. The enzyme catalyses tRNA(Glu) + L-glutamate + ATP = L-glutamyl-tRNA(Glu) + AMP + diphosphate. Catalyzes the attachment of glutamate to tRNA(Glu) in a two-step reaction: glutamate is first activated by ATP to form Glu-AMP and then transferred to the acceptor end of tRNA(Glu). The protein is Glutamate--tRNA ligase of Rhodopseudomonas palustris (strain TIE-1).